The sequence spans 273 residues: Mediator of RNA polymerase II transcription subunit 18 (273 aa).

Low complexity predominate over residues 90-106 (GAQSSAASSGDPDAPMS). A disordered region spans residues 90-114 (GAQSSAASSGDPDAPMSGTDTGTNF).

The protein belongs to the Mediator complex subunit 18 family. Component of the Mediator complex.

The protein localises to the nucleus. In terms of biological role, component of the Mediator complex, a coactivator involved in the regulated transcription of nearly all RNA polymerase II-dependent genes. Mediator functions as a bridge to convey information from gene-specific regulatory proteins to the basal RNA polymerase II transcription machinery. Mediator is recruited to promoters by direct interactions with regulatory proteins and serves as a scaffold for the assembly of a functional preinitiation complex with RNA polymerase II and the general transcription factors. The polypeptide is Mediator of RNA polymerase II transcription subunit 18 (srb5) (Aspergillus oryzae (strain ATCC 42149 / RIB 40) (Yellow koji mold)).